The sequence spans 607 residues: Dopamine receptor 3 (607 aa).

Over 1–23 the chain is Extracellular; it reads MLAGQHHVTDIESPLMVVLWRVA. Residues 24–44 form a helical membrane-spanning segment; the sequence is AGVFLPLVPTMAVFGNVLVIM. Topologically, residues 45-58 are cytoplasmic; that stretch reads SVFRERSLQTVTNM. A helical transmembrane segment spans residues 59 to 79; that stretch reads LIVSLAVSDFMVAIGVMSFGV. Over 80–96 the chain is Extracellular; it reads YYEWNDFKWGLGSFFCH. A disulfide bridge links cysteine 95 with cysteine 173. A helical transmembrane segment spans residues 97–117; the sequence is VYQALDVACSTASILNLLAIS. Residues 118–141 lie on the Cytoplasmic side of the membrane; sequence LDRYIAIGHPISYAQYGARGGRAM. The chain crosses the membrane as a helical span at residues 142-162; that stretch reads ISITIVWGVSVAVALPLLLGV. Residues 163–182 lie on the Extracellular side of the membrane; the sequence is NPMEENDLQECELANPYFNM. The chain crosses the membrane as a helical span at residues 183 to 203; it reads ISSIFSFFIPCIAMIILYTII. The Cytoplasmic portion of the chain corresponds to 204–523; sequence FRRLRQRERA…TKQMRREHKA (320 aa). Residues 402–435 are disordered; the sequence is VPSIQDEKKLSQKSNDLPFSHQNGTHKQKLLPNP. Residues 413–424 show a composition bias toward polar residues; the sequence is QKSNDLPFSHQN. A helical transmembrane segment spans residues 524-544; it reads TVTLAVVLAVFLFCWLPFFVL. At 545–558 the chain is on the extracellular side; the sequence is HLSNSICLIIDENS. Residues 559–579 traverse the membrane as a helical segment; that stretch reads ACVGFLPLYLATWLGYLNSSL. At 580-607 the chain is on the cytoplasmic side; the sequence is NPLIYTVFDQRFRNAFRNILSCGIFKKR.

It belongs to the G-protein coupled receptor 1 family. Expressed in the neurons of the head, ventral cord and tail with weak expression observed in body wall muscles and PVD neurons. In the ventral cord, expressed strongly in GABAergic neurons with weaker expression in cholinergic motor neurons. Expressed in cholinergic SIA neurons and octopaminergic RIC neurons. In males, expressed in the dorsal and ventral spicule protractor and retractor muscles, and the sensory post-cloacal sensilla B (PCB) neuron. Expressed in the head acetylcholine neurons. Expressed in the AVA, AVB, AVD and AVE command interneurons. Expressed in premotor interneurons.

Its subcellular location is the cell membrane. In terms of biological role, G-protein coupled receptor which binds to the neurotransmitter dopamine with high affinity leading to the activation of an associated G-protein and downstream signaling pathways. Couples to G-proteins to inhibit adenylate cyclase (AC) activity and cAMP production. Antagonizes the D1-like dopamine receptor dop-1 to negatively regulate the rate of locomotion. Negatively regulates locomotion through the activation of goa-1 subunit proteins which inactivates the unc-77/nca-1 and nca-2 ion-channels in the command interneurons. Inhibits early-stage swimming by modulating the unc-77/nca-1 and nca-2 ion channels of premotor interneurons. In GABAergic, RIC, and SIA neurons, antagonizes the function of dop-1 to play a role in behavioral plasticity and regulate the decision-making process when conflicting alternatives are present. Antagonizes octopamine signaling in response to food by promoting the dopamine-mediated suppression of crh-1/CREB1 transcription factor activation in cholinergic SIA neurons. This is most likely in association with the G(o)-alpha G-protein subunit goa-1. Promotes male mating behavior by antagonizing acetylcholine signaling to control the protrusion of copulatory spicules from the tail of males during hermaphrodite vulval location. Under mitochondria stress, plays a role in bacterial preference, resulting in learned avoidance behavior. The protein is Dopamine receptor 3 of Caenorhabditis elegans.